Here is a 194-residue protein sequence, read N- to C-terminus: E3 ubiquitin-protein ligase RNF185 (194 aa).

Over residues M1 to G27 the composition is skewed to low complexity. Positions M1 to G32 are disordered. Residues G31–K82 are required for ubiquitin ligase activity and protection against ER stress-induced cell death. An RING-type zinc finger spans residues C41 to K82. The disordered stretch occupies residues P92–Q126. Helical transmembrane passes span G133–F153 and Q174–A194.

Its subcellular location is the mitochondrion outer membrane. The protein localises to the endoplasmic reticulum membrane. The catalysed reaction is S-ubiquitinyl-[E2 ubiquitin-conjugating enzyme]-L-cysteine + [acceptor protein]-L-lysine = [E2 ubiquitin-conjugating enzyme]-L-cysteine + N(6)-ubiquitinyl-[acceptor protein]-L-lysine.. Its pathway is protein modification; protein ubiquitination. In terms of biological role, E3 ubiquitin-protein ligase that regulates selective mitochondrial autophagy by mediating 'Lys-63'-linked polyubiquitination. Acts in the endoplasmic reticulum (ER)-associated degradation (ERAD) pathway, which targets misfolded proteins that accumulate in the endoplasmic reticulum (ER) for ubiquitination and subsequent proteasome-mediated degradation. Protects cells from ER stress-induced apoptosis. Responsible for the cotranslational ubiquitination and degradation of CFTR in the ERAD pathway. Also acts as a regulator of the innate antiviral response by catalyzing 'Lys-27'-linked polyubiquitination of CGAS, thereby promoting CGAS cyclic GMP-AMP synthase activity. Preferentially associates with the E2 enzymes UBE2J1 and UBE2J2. This Danio rerio (Zebrafish) protein is E3 ubiquitin-protein ligase RNF185 (rnf185).